The primary structure comprises 346 residues: UDP-3-O-acylglucosamine N-acyltransferase (346 aa).

H253 (proton acceptor) is an active-site residue.

The protein belongs to the transferase hexapeptide repeat family. LpxD subfamily. In terms of assembly, homotrimer.

The enzyme catalyses a UDP-3-O-[(3R)-3-hydroxyacyl]-alpha-D-glucosamine + a (3R)-hydroxyacyl-[ACP] = a UDP-2-N,3-O-bis[(3R)-3-hydroxyacyl]-alpha-D-glucosamine + holo-[ACP] + H(+). It functions in the pathway bacterial outer membrane biogenesis; LPS lipid A biosynthesis. In terms of biological role, catalyzes the N-acylation of UDP-3-O-acylglucosamine using 3-hydroxyacyl-ACP as the acyl donor. Is involved in the biosynthesis of lipid A, a phosphorylated glycolipid that anchors the lipopolysaccharide to the outer membrane of the cell. This is UDP-3-O-acylglucosamine N-acyltransferase from Rickettsia prowazekii (strain Madrid E).